We begin with the raw amino-acid sequence, 331 residues long: Putative serine/threonine-protein kinase ZK507.1 (331 aa).

The Protein kinase domain occupies 1–270 (MKVNEEGFAI…CKLTLKEPLV (270 aa)). Catalysis depends on Asp-116, which acts as the Proton acceptor. Basic and acidic residues predominate over residues 302-314 (SDRNEENSLDRSK). Residues 302–331 (SDRNEENSLDRSKTGTLSFNNSKNKKPSRY) are disordered.

This sequence belongs to the protein kinase superfamily. Ser/Thr protein kinase family.

It carries out the reaction L-seryl-[protein] + ATP = O-phospho-L-seryl-[protein] + ADP + H(+). It catalyses the reaction L-threonyl-[protein] + ATP = O-phospho-L-threonyl-[protein] + ADP + H(+). This is Putative serine/threonine-protein kinase ZK507.1 from Caenorhabditis elegans.